Reading from the N-terminus, the 136-residue chain is NADH-quinone oxidoreductase subunit A (136 aa).

3 helical membrane passes run 20 to 40, 70 to 90, and 99 to 119; these read LAVY…VAWW, VPFY…AYIL, and LGWA…VGLV.

Belongs to the complex I subunit 3 family. In terms of assembly, NDH-1 is composed of 14 different subunits. Subunits NuoA, H, J, K, L, M, N constitute the membrane sector of the complex.

The protein localises to the cell inner membrane. It carries out the reaction a quinone + NADH + 5 H(+)(in) = a quinol + NAD(+) + 4 H(+)(out). NDH-1 shuttles electrons from NADH, via FMN and iron-sulfur (Fe-S) centers, to quinones in the respiratory chain. The immediate electron acceptor for the enzyme in this species is believed to be ubiquinone. Couples the redox reaction to proton translocation (for every two electrons transferred, four hydrogen ions are translocated across the cytoplasmic membrane), and thus conserves the redox energy in a proton gradient. This is NADH-quinone oxidoreductase subunit A from Syntrophobacter fumaroxidans (strain DSM 10017 / MPOB).